The following is a 191-amino-acid chain: Putative glutathione-dependent formaldehyde-activating enzyme (191 aa).

The region spanning 20–166 (FPGGNLYCLC…FQSLGLQTYD (147 aa)) is the CENP-V/GFA domain. C27, C29, C48, C50, C53, C95, and C98 together coordinate Zn(2+).

It belongs to the Gfa family. Requires Zn(2+) as cofactor.

It carries out the reaction S-(hydroxymethyl)glutathione = glutathione + formaldehyde. It participates in one-carbon metabolism; formaldehyde degradation; formate from formaldehyde (glutathione route): step 1/3. In terms of biological role, catalyzes the condensation of formaldehyde and glutathione to S-hydroxymethylglutathione. The polypeptide is Putative glutathione-dependent formaldehyde-activating enzyme (Aspergillus flavus (strain ATCC 200026 / FGSC A1120 / IAM 13836 / NRRL 3357 / JCM 12722 / SRRC 167)).